We begin with the raw amino-acid sequence, 250 residues long: MSPNPTPDLTTIQRQQTEKILNPIARGQVTQDLSENIILTTVDDLHNWARLSSLWPLLYGTACCFIEFAALIGSRFDFDRFGLVPRSSPRQADLIITAGTITMKMAPALVRLYEEMPEPKYVIAMGACTITGGMFSSDSTTAVRGVDKLIPVDVYIPGCPPRPEAIFDAIIKLRKKVSNETIQERATVMEQTHRYYSTTHNMKAVDPILTGKYLQTATRQTPPKELTDAIGMPIPPALASQQQKEEINRG.

The [4Fe-4S] cluster site is built by Cys-63, Cys-64, Cys-128, and Cys-159.

The protein belongs to the complex I 20 kDa subunit family. NDH-1 can be composed of about 15 different subunits; different subcomplexes with different compositions have been identified which probably have different functions. It depends on [4Fe-4S] cluster as a cofactor.

The protein localises to the cellular thylakoid membrane. The enzyme catalyses a plastoquinone + NADH + (n+1) H(+)(in) = a plastoquinol + NAD(+) + n H(+)(out). The catalysed reaction is a plastoquinone + NADPH + (n+1) H(+)(in) = a plastoquinol + NADP(+) + n H(+)(out). Its function is as follows. NDH-1 shuttles electrons from an unknown electron donor, via FMN and iron-sulfur (Fe-S) centers, to quinones in the respiratory and/or the photosynthetic chain. The immediate electron acceptor for the enzyme in this species is believed to be plastoquinone. Couples the redox reaction to proton translocation, and thus conserves the redox energy in a proton gradient. Cyanobacterial NDH-1 also plays a role in inorganic carbon-concentration. The protein is NAD(P)H-quinone oxidoreductase subunit K of Rippkaea orientalis (strain PCC 8801 / RF-1) (Cyanothece sp. (strain PCC 8801)).